The sequence spans 118 residues: V-type proton ATPase subunit G 3 (118 aa).

Residues methionine 1–lysine 34 form a disordered region. The stretch at serine 5–glutamate 54 forms a coiled coil. Residues alanine 14–lysine 26 show a composition bias toward basic and acidic residues.

This sequence belongs to the V-ATPase G subunit family. In terms of assembly, V-ATPase is a heteromultimeric enzyme made up of two complexes: the ATP-hydrolytic V1 complex and the proton translocation V0 complex. The V1 complex consists of three catalytic AB heterodimers that form a heterohexamer, three peripheral stalks each consisting of EG heterodimers, one central rotor including subunits D and F, and the regulatory subunits C and H. The proton translocation complex V0 consists of the proton transport subunit a, a ring of proteolipid subunits c9c'', rotary subunit d, subunits e and f, and the accessory subunits ATP6AP1/Ac45 and ATP6AP2/PRR. In terms of tissue distribution, kidney.

Its function is as follows. Subunit of the V1 complex of vacuolar(H+)-ATPase (V-ATPase), a multisubunit enzyme composed of a peripheral complex (V1) that hydrolyzes ATP and a membrane integral complex (V0) that translocates protons. V-ATPase is responsible for acidifying and maintaining the pH of intracellular compartments and in some cell types, is targeted to the plasma membrane, where it is responsible for acidifying the extracellular environment. The protein is V-type proton ATPase subunit G 3 (ATP6V1G3) of Homo sapiens (Human).